The chain runs to 147 residues: Hemoglobin subunit beta (147 aa).

V2 carries the post-translational modification N-acetylvaline. A Globin domain is found at 3–147; it reads HLSGDEKNAV…VANALAHRYH (145 aa). The residue at position 45 (S45) is a Phosphoserine. K60 is modified (N6-acetyllysine). H64 lines the heme b pocket. Position 83 is an N6-acetyllysine (K83). Heme b is bound at residue H93. An S-nitrosocysteine modification is found at C94.

Belongs to the globin family. In terms of assembly, heterotetramer of two alpha chains and two beta chains. In terms of tissue distribution, red blood cells.

Functionally, involved in oxygen transport from the lung to the various peripheral tissues. This is Hemoglobin subunit beta (HBB) from Camelus dromedarius (Dromedary).